We begin with the raw amino-acid sequence, 303 residues long: Glycine--tRNA ligase alpha subunit (303 aa).

This sequence belongs to the class-II aminoacyl-tRNA synthetase family. Tetramer of two alpha and two beta subunits.

The protein resides in the cytoplasm. The catalysed reaction is tRNA(Gly) + glycine + ATP = glycyl-tRNA(Gly) + AMP + diphosphate. In Cronobacter sakazakii (strain ATCC BAA-894) (Enterobacter sakazakii), this protein is Glycine--tRNA ligase alpha subunit.